The following is a 323-amino-acid chain: tRNA U34 carboxymethyltransferase (323 aa).

Carboxy-S-adenosyl-L-methionine is bound by residues Lys91, Trp105, Lys110, Gly130, 152–154 (DPT), 181–182 (IE), Met196, Tyr200, and Arg315.

The protein belongs to the class I-like SAM-binding methyltransferase superfamily. CmoB family. Homotetramer.

The enzyme catalyses carboxy-S-adenosyl-L-methionine + 5-hydroxyuridine(34) in tRNA = 5-carboxymethoxyuridine(34) in tRNA + S-adenosyl-L-homocysteine + H(+). Functionally, catalyzes carboxymethyl transfer from carboxy-S-adenosyl-L-methionine (Cx-SAM) to 5-hydroxyuridine (ho5U) to form 5-carboxymethoxyuridine (cmo5U) at position 34 in tRNAs. The polypeptide is tRNA U34 carboxymethyltransferase (Shigella boydii serotype 18 (strain CDC 3083-94 / BS512)).